We begin with the raw amino-acid sequence, 278 residues long: Bicarbonate transport ATP-binding protein CmpD (278 aa).

The ABC transporter domain maps to 21-254 (LIVENVSKIY…RPRDRERIME (234 aa)). 57 to 64 (GHSGCGKS) is an ATP binding site.

It belongs to the ABC transporter superfamily. Nitrate/nitrite/cyanate uptake transporter (NitT) (TC 3.A.1.16) family. As to quaternary structure, the complex is composed of two ATP-binding proteins (CmpC and CmpD), a transmembrane protein (CmpB) and a solute-binding protein (CmpA).

It localises to the cell inner membrane. In terms of biological role, part of the ABC transporter complex CmpABCD involved in bicarbonate transport. Responsible for energy coupling to the transport system. The polypeptide is Bicarbonate transport ATP-binding protein CmpD (cmpD) (Synechococcus elongatus (strain ATCC 33912 / PCC 7942 / FACHB-805) (Anacystis nidulans R2)).